The chain runs to 109 residues: Small ribosomal subunit protein bS20 (109 aa).

Belongs to the bacterial ribosomal protein bS20 family.

Binds directly to 16S ribosomal RNA. This is Small ribosomal subunit protein bS20 from Synechococcus sp. (strain JA-2-3B'a(2-13)) (Cyanobacteria bacterium Yellowstone B-Prime).